An 878-amino-acid polypeptide reads, in one-letter code: Alanine--tRNA ligase (878 aa).

Zn(2+) contacts are provided by H571, H575, C673, and H677.

The protein belongs to the class-II aminoacyl-tRNA synthetase family. Zn(2+) serves as cofactor.

The protein localises to the cytoplasm. The catalysed reaction is tRNA(Ala) + L-alanine + ATP = L-alanyl-tRNA(Ala) + AMP + diphosphate. In terms of biological role, catalyzes the attachment of alanine to tRNA(Ala) in a two-step reaction: alanine is first activated by ATP to form Ala-AMP and then transferred to the acceptor end of tRNA(Ala). Also edits incorrectly charged Ser-tRNA(Ala) and Gly-tRNA(Ala) via its editing domain. The sequence is that of Alanine--tRNA ligase from Syntrophus aciditrophicus (strain SB).